A 350-amino-acid chain; its full sequence is uncharacterized protein (350 aa).

An Integrase catalytic domain is found at 164 to 327 (NDPLPGYVEV…EKTRIGARVV (164 aa)).

This is an uncharacterized protein from Sinorhizobium fredii (strain NBRC 101917 / NGR234).